The primary structure comprises 300 residues: Meiosis-specific cyclin crs1 (300 aa).

Residues 61 to 183 (IIEQEKKGLT…VLALLNFDIY (123 aa)) form the Cyclin N-terminal domain.

The protein belongs to the cyclin family. Cyclin AB subfamily.

It is found in the cytoplasm. Its subcellular location is the nucleus. Its function is as follows. Has a role in meiotic chromosome segregation. This Schizosaccharomyces pombe (strain 972 / ATCC 24843) (Fission yeast) protein is Meiosis-specific cyclin crs1 (crs1).